The primary structure comprises 95 residues: Small ribosomal subunit protein bS6 (95 aa).

Belongs to the bacterial ribosomal protein bS6 family.

Functionally, binds together with bS18 to 16S ribosomal RNA. The protein is Small ribosomal subunit protein bS6 of Rhodococcus jostii (strain RHA1).